Here is a 258-residue protein sequence, read N- to C-terminus: Chymotrypsin-like elastase family member 1 (258 aa).

Positions Met-1–Ser-8 are cleaved as a signal peptide. Residues Thr-9–Arg-18 constitute a propeptide, activation peptide. One can recognise a Peptidase S1 domain in the interval Val-19 to Ala-256. Residues Cys-48 and Cys-64 are joined by a disulfide bond. Catalysis depends on His-63, which acts as the Charge relay system. Ca(2+) contacts are provided by Glu-77, Asn-79, Gln-82, and Glu-87. Residue Asn-79 is glycosylated (N-linked (GlcNAc...) asparagine). Asp-111 acts as the Charge relay system in catalysis. 3 disulfide bridges follow: Cys-145-Cys-212, Cys-176-Cys-192, and Cys-202-Cys-232. The Charge relay system role is filled by Ser-206. Asn-233 carries an N-linked (GlcNAc...) asparagine glycan.

Belongs to the peptidase S1 family. Elastase subfamily. The cofactor is Ca(2+).

It is found in the secreted. It carries out the reaction Hydrolysis of proteins, including elastin. Preferential cleavage: Ala-|-Xaa.. Serine proteases that hydrolyze many proteins in addition to elastin. This Canis lupus familiaris (Dog) protein is Chymotrypsin-like elastase family member 1 (CELA1).